Reading from the N-terminus, the 861-residue chain is Oleate activated transcription factor 3 (861 aa).

The segment at residues 19–47 is a DNA-binding region (zn(2)-C6 fungal-type); sequence NCKKRKSKCDRTKPCGTCVRLGDVDSCVY. Over residues 52 to 61 the composition is skewed to polar residues; the sequence is SGQPESSPSL. A disordered region spans residues 52 to 99; sequence SGQPESSPSLNDADPLRKQSTPAERISPGFIKKRRSSQTRQDEDHWQR.

It belongs to the OAF3 family.

It is found in the cytoplasm. The protein localises to the nucleus. It localises to the mitochondrion. Transcriptional inhibitor with a significantly increased number of target genes in response to oleate. This chain is Oleate activated transcription factor 3 (OAF3), found in Saccharomyces cerevisiae (strain JAY291) (Baker's yeast).